We begin with the raw amino-acid sequence, 125 residues long: Putative iron-sulfur cluster insertion protein ErpA 2 (125 aa).

The iron-sulfur cluster site is built by C53, C117, and C119.

It belongs to the HesB/IscA family. As to quaternary structure, homodimer. Iron-sulfur cluster serves as cofactor.

In terms of biological role, required for insertion of 4Fe-4S clusters. The chain is Putative iron-sulfur cluster insertion protein ErpA 2 from Polaromonas naphthalenivorans (strain CJ2).